The primary structure comprises 321 residues: Mechanosensory protein 3 (321 aa).

2 consecutive LIM zinc-binding domains span residues 27-86 (NKCN…DHSI) and 87-152 (HRCA…QMDD). A DNA-binding region (homeobox) is located at residues 217 to 276 (RRGPRTTIKQNQLDVLNEMFSNTPKPSKHARAKLALETGLSMRVIQVWFQNRRSKERRLK).

As to quaternary structure, interacts with unc-86; the heterooligomer binds to the promoters of mec-3, mec-4 and mec-7. In terms of tissue distribution, expressed in the mechanosensory neurons ALML, ALMR, PLML, PLMR, AVM and PVM, and the FLPL and FLPR neurons.

The protein localises to the nucleus. Its function is as follows. Transcription factor. Specifies differentiation of the set of six touch receptor neurons (TRNs). May positively modulate expression of both its own gene and also of homeobox ARX homolog alr-1 in TRNs, forming a positive feedback loop with alr-1, thereby restricting the variability of expression of mec-3. Required to determine the identity of ALM sensory neurons, acting by interacting with unc-86, thereby preventing unc-86 cooperating with pag-3 to induce BDU-neuron specific genes. Binds cooperatively as a heterodimer with unc-86 to sites in the mec-3 gene promoter. Promotes outgrowth of lateral dendritic branches on the PVD nociceptive neurons, probably acting both directly, and upstream of zinc finger protein egl-46. The protein is Mechanosensory protein 3 (mec-3) of Caenorhabditis elegans.